The chain runs to 621 residues: C4-dicarboxylate transport sensor protein DctB (621 aa).

The Cytoplasmic portion of the chain corresponds to 1–26 (MHHVRMVKLPAEASDPHALRSRARRS). The helical transmembrane segment at 27 to 45 (WLVFAAVALVLLAAGLLLA) threads the bilayer. Over 46 to 320 (RDYGRSQALA…PLAAGAREAQ (275 aa)) the chain is Periplasmic. The chain crosses the membrane as a helical span at residues 321–338 (LLTLAALVPLLALAALLL). Topologically, residues 339 to 621 (RRRQVVAMRS…TTFAVNLKKA (283 aa)) are cytoplasmic. The 210-residue stretch at 412 to 621 (GVAHEINQPV…TTFAVNLKKA (210 aa)) folds into the Histidine kinase domain. At His415 the chain carries Phosphohistidine; by autocatalysis.

In terms of processing, autophosphorylated.

It is found in the cell inner membrane. The enzyme catalyses ATP + protein L-histidine = ADP + protein N-phospho-L-histidine.. In terms of biological role, member of the two-component regulatory system DctB/DctD involved in the transport of C4-dicarboxylates. DctB functions as a membrane-associated protein kinase that phosphorylates DctD in response to environmental signals. The polypeptide is C4-dicarboxylate transport sensor protein DctB (dctB) (Rhizobium meliloti (strain 1021) (Ensifer meliloti)).